A 116-amino-acid polypeptide reads, in one-letter code: uncharacterized protein (116 aa).

The N-acetylmuramoyl-L-alanine amidase domain occupies 2–73; it reads DGSVGTGRQV…PKALICGHRD (72 aa).

To phage T3 and T7 N-acetylmuramoyl-L-alanine amidases.

This is an uncharacterized protein from Haemophilus influenzae (strain ATCC 51907 / DSM 11121 / KW20 / Rd).